A 152-amino-acid chain; its full sequence is Prostaglandin E synthase (152 aa).

The Lumenal portion of the chain corresponds to 1–12 (MPAHSLVMSSPA). A helical membrane pass occupies residues 13-41 (LPAFLLCSTLLVIKMYVVAIITGQVRLRK). Arg38 serves as a coordination point for glutathione. Residues 42-60 (KAFANPEDALRHGGPQYCR) are Cytoplasmic-facing. The helical transmembrane segment at 61–90 (SDPDVERCLRAHRNDMETIYPFLFLGFVYS) threads the bilayer. 73–77 (RNDME) is a binding site for glutathione. Topologically, residues 91–95 (FLGPN) are lumenal. A helical transmembrane segment spans residues 96 to 119 (PFVAWMHFLVFLVGRVAHTVAYLG). 2 residues coordinate glutathione: His113 and Tyr117. Residues 120–123 (KLRA) are Cytoplasmic-facing. The chain crosses the membrane as a helical span at residues 124–152 (PIRSVTYTLAQLPCASMALQILWEAARHL). Residue 126–130 (RSVTY) coordinates glutathione.

This sequence belongs to the MAPEG family. As to quaternary structure, homotrimer. The cofactor is glutathione.

The protein resides in the membrane. It is found in the cytoplasm. Its subcellular location is the perinuclear region. It carries out the reaction prostaglandin H2 = prostaglandin E2. The enzyme catalyses 2-glyceryl-prostaglandin H2 = 2-glyceryl-prostaglandin E2. The catalysed reaction is prostaglandin G2 = (15S)-15-hydroperoxy-prostaglandin E2. It catalyses the reaction 1-chloro-2,4-dinitrobenzene + glutathione = 2,4-dinitrophenyl-S-glutathione + chloride + H(+). It carries out the reaction (5S)-hydroperoxy-(6E,8Z,11Z,14Z)-eicosatetraenoate + 2 glutathione = (5S)-hydroxy-(6E,8Z,11Z,14Z)-eicosatetraenoate + glutathione disulfide + H2O. It functions in the pathway lipid metabolism; prostaglandin biosynthesis. With respect to regulation, induced by interleukin IL1B. Its function is as follows. Terminal enzyme of the cyclooxygenase (COX)-2-mediated prostaglandin E2 (PGE2) biosynthetic pathway. Catalyzes the glutathione-dependent oxidoreduction of prostaglandin endoperoxide H2 (PGH2) to prostaglandin E2 (PGE2) in response to inflammatory stimuli. Plays a key role in inflammation response, fever and pain. Also catalyzes the oxidoreduction of endocannabinoids into prostaglandin glycerol esters and PGG2 into 15-hydroperoxy-PGE2. In addition, displays low glutathione transferase and glutathione-dependent peroxidase activities, toward 1-chloro-2,4-dinitrobenzene and 5-hydroperoxyicosatetraenoic acid (5-HPETE), respectively. In Homo sapiens (Human), this protein is Prostaglandin E synthase (PTGES).